A 1179-amino-acid chain; its full sequence is Integrin alpha-1 (1179 aa).

A signal peptide spans M1–S28. Residues F29–P1141 are Extracellular-facing. Residues N30–P91 form an FG-GAP 1 repeat. C82 and C92 form a disulfide bridge. N-linked (GlcNAc...) asparagine glycosylation is found at N100, N105, N112, N217, N317, N341, N402, N418, and N459. Residues T101 to S160 form an FG-GAP 2 repeat. Residues I175–A364 enclose the VWFA domain. Residues T365–H417 form an FG-GAP 3 repeat. 4 FG-GAP repeats span residues Q422–V474, N475–Y537, S556–K614, and Q618–N678. Residues D497, D499, D501, and D505 each contribute to the Ca(2+) site. N-linked (GlcNAc...) asparagine glycosylation occurs at N531. Residues D579, N581, D583, D587, D641, N643, D645, and D649 each coordinate Ca(2+). C687 and C696 are oxidised to a cystine. N-linked (GlcNAc...) asparagine glycans are attached at residues N698, N747, and N779. A disulfide bridge connects residues C702 and C755. C807 and C813 form a disulfide bridge. Residues N839, N882, N907, N938, N965, N973, and N1007 are each glycosylated (N-linked (GlcNAc...) asparagine). Cysteines 877 and 885 form a disulfide. 2 disulfide bridges follow: C1029-C1062 and C1065-C1072. N1083, N1102, and N1113 each carry an N-linked (GlcNAc...) asparagine glycan. Residues L1142 to W1164 form a helical membrane-spanning segment. The Cytoplasmic portion of the chain corresponds to K1165 to K1179. Positions G1167 to R1171 match the GFFKR motif motif.

Belongs to the integrin alpha chain family. In terms of assembly, heterodimer of an alpha and a beta subunit. Alpha-1 associates with beta-1. Interacts with RAB21. Interacts (via cytoplasmic domain) with PTPN2; activates PTPN2 phosphatase activity towards EGFR and negatively regulates EGF signaling.

It is found in the membrane. In terms of biological role, integrin alpha-1/beta-1 is a receptor for laminin and collagen. It recognizes the proline-hydroxylated sequence G-F-P-G-E-R in collagen. Involved in anchorage-dependent, negative regulation of EGF-stimulated cell growth. The sequence is that of Integrin alpha-1 (Itga1) from Mus musculus (Mouse).